A 574-amino-acid polypeptide reads, in one-letter code: Sulfate adenylyltransferase (574 aa).

Residues 1 to 170 (MANPPHGGVL…VEAIDRLEHY (170 aa)) form an N-terminal region. Positions 171–395 (DYVGLRYTPA…LRESHPPRNQ (225 aa)) are catalytic. Sulfate is bound at residue Gln-198. ATP is bound by residues 198-201 (QTRN) and 292-295 (GRDH). Catalysis depends on residues Thr-199, Arg-200, and Asn-201. A sulfate-binding site is contributed by Arg-200. A sulfate-binding site is contributed by Ala-296. Met-334 lines the ATP pocket. Residues 396-574 (QGFTVFLTGY…LESQGLLTQL (179 aa)) form an allosteric regulation domain; adenylyl-sulfate kinase-like region. Residues 435–438 (ETVR), Arg-452, 478–479 (IA), and Arg-516 contribute to the 3'-phosphoadenylyl sulfate site.

In the N-terminal section; belongs to the sulfate adenylyltransferase family. This sequence in the C-terminal section; belongs to the APS kinase family. Homohexamer. Dimer of trimers.

It is found in the cytoplasm. The catalysed reaction is sulfate + ATP + H(+) = adenosine 5'-phosphosulfate + diphosphate. The protein operates within sulfur metabolism; hydrogen sulfide biosynthesis; sulfite from sulfate: step 1/3. With respect to regulation, allosterically inhibited by 3'-phosphoadenosine 5'-phosphosulfate (PAPS). In terms of biological role, catalyzes the first intracellular reaction of sulfate assimilation, forming adenosine-5'-phosphosulfate (APS) from inorganic sulfate and ATP. Plays an important role in sulfate activation as a component of the biosynthesis pathway of sulfur-containing amino acids. The polypeptide is Sulfate adenylyltransferase (Phaeosphaeria nodorum (strain SN15 / ATCC MYA-4574 / FGSC 10173) (Glume blotch fungus)).